The sequence spans 325 residues: Probable 2-ketogluconate reductase (325 aa).

Residues 158–159 (RI), Thr211, 238–240 (ISR), and Asp264 each bind NAD(+). Arg240 is a catalytic residue. Residue Glu269 is part of the active site. His288 (proton donor) is an active-site residue. 288 to 291 (HIGS) is a binding site for NAD(+).

This sequence belongs to the D-isomer specific 2-hydroxyacid dehydrogenase family.

It carries out the reaction D-gluconate + NADP(+) = 2-dehydro-D-gluconate + NADPH + H(+). In Bacillus subtilis (strain 168), this protein is Probable 2-ketogluconate reductase (yvcT).